The chain runs to 128 residues: Phosphoribosyl-AMP cyclohydrolase (128 aa).

Residue Asp-79 participates in Mg(2+) binding. Cys-80 contacts Zn(2+). Positions 81 and 83 each coordinate Mg(2+). Cys-97 and Cys-104 together coordinate Zn(2+).

Belongs to the PRA-CH family. As to quaternary structure, homodimer. Mg(2+) serves as cofactor. Requires Zn(2+) as cofactor.

The protein resides in the cytoplasm. It catalyses the reaction 1-(5-phospho-beta-D-ribosyl)-5'-AMP + H2O = 1-(5-phospho-beta-D-ribosyl)-5-[(5-phospho-beta-D-ribosylamino)methylideneamino]imidazole-4-carboxamide. It functions in the pathway amino-acid biosynthesis; L-histidine biosynthesis; L-histidine from 5-phospho-alpha-D-ribose 1-diphosphate: step 3/9. Catalyzes the hydrolysis of the adenine ring of phosphoribosyl-AMP. The chain is Phosphoribosyl-AMP cyclohydrolase from Saccharophagus degradans (strain 2-40 / ATCC 43961 / DSM 17024).